Reading from the N-terminus, the 188-residue chain is UPF0397 protein LCK_00164 (188 aa).

5 helical membrane-spanning segments follow: residues 15–35 (VVATGIGAAVFFVLMKFIAIP), 48–68 (GWLALIAGLFGPVVGLLVGLI), 79–99 (GAPWWSWVIADGVFGLLLGFG), 121–141 (WQAVSNVLVWVIIAPLGDIII), and 154–174 (AVTTVVNTISVAIIGSLLLVA).

This sequence belongs to the UPF0397 family.

Its subcellular location is the cell membrane. This chain is UPF0397 protein LCK_00164, found in Leuconostoc citreum (strain KM20).